Here is a 315-residue protein sequence, read N- to C-terminus: Homoserine O-succinyltransferase (315 aa).

Cys-142 (acyl-thioester intermediate) is an active-site residue. Substrate is bound by residues Lys-163 and Ser-192. His-235 functions as the Proton acceptor in the catalytic mechanism. Glu-237 is an active-site residue. Position 249 (Arg-249) interacts with substrate. Residues 249-258 (RDCEKSDNAP) show a composition bias toward basic and acidic residues. Residues 249 to 271 (RDCEKSDNAPKPENYFPDDDATK) are disordered.

Belongs to the MetA family.

Its subcellular location is the cytoplasm. It carries out the reaction L-homoserine + succinyl-CoA = O-succinyl-L-homoserine + CoA. Its pathway is amino-acid biosynthesis; L-methionine biosynthesis via de novo pathway; O-succinyl-L-homoserine from L-homoserine: step 1/1. In terms of biological role, transfers a succinyl group from succinyl-CoA to L-homoserine, forming succinyl-L-homoserine. The protein is Homoserine O-succinyltransferase of Pseudoalteromonas translucida (strain TAC 125).